The sequence spans 585 residues: MARSRQPTRFSSEAPSESSSSTSPERAADDDTDFFTLQANDSQSSIGAGNPRDSHIQNDPETVLPPIAYLPPEILISIFSKLSSPRDLLSCLLVCRIWALNCVGLLWHRPSCNNWDNLKKIAAAVGEEDSFFLYSSLIKRLNLSALTEDVSDGTVVPFSQCNRIERLTLTNCRKLTDIGVSDLVVGSRHLQALDVSELRSLTDHTLFKVAENCNRLQGLNITGCVKVTDDSLIAVSQNCRLLKRLKLNGVSQVTDKAILSFAQNCPSILEIDLQECKLVTNQSVTALMTTLQNLRELRLAHCTEIDDSAFLDLPRHIQMTSLRILDLTACENIRDEAVERIVSSAPRLRNLVLAKCKFITDRAVWAICKLGKNLHYVHLGHCSNINDSAVIQLVKSCNRIRYIDLACCSRLTDRSVQQLATLPKLRRIGLVKCQLITDASILALARPAQDHSVPCSSLERVHLSYCVNLTMVGIHALLNSCPRLTHLSLTGVAAFLREELTVFCREAPPEFTRQQREVFCVFSGEGVNRLRNHLNREAAPQRDANEATMYDDEEELDEDEGQVTGLMHAAAINDDDYINITPPHA.

Polar residues predominate over residues 1–10; sequence MARSRQPTRF. 2 disordered regions span residues 1–34 and 41–60; these read MARS…DTDF and DSQS…QNDP. Positions 11 to 25 are enriched in low complexity; sequence SSEAPSESSSSTSPE. The region spanning 65–113 is the F-box domain; sequence PPIAYLPPEILISIFSKLSSPRDLLSCLLVCRIWALNCVGLLWHRPSCN. LRR repeat units follow at residues 147 to 171, 172 to 197, 198 to 223, 224 to 249, 250 to 275, 276 to 301, 302 to 329, 330 to 355, 356 to 381, 382 to 407, 408 to 432, 433 to 465, and 466 to 491; these read TEDV…TLTN, CRKL…DVSE, LRSL…NITG, CVKV…KLNG, VSQV…DLQE, CKLV…RLAH, CTEI…DLTA, CENI…VLAK, CKFI…HLGH, CSNI…DLAC, CSRL…GLVK, CQLI…HLSY, and CVNL…SLTG.

As to quaternary structure, part of a SCF E3 ubiquitin ligase complex. Specifically expressed in ascus mother cells.

Its subcellular location is the cytoplasm. Its function is as follows. Involved in meiosis and required for ascospore formation. Involved in substrate recognition in ubiquitin-dependent degradation. The chain is SCF E3 ubiquitin ligase complex F-box protein grrA (grrA) from Emericella nidulans (strain FGSC A4 / ATCC 38163 / CBS 112.46 / NRRL 194 / M139) (Aspergillus nidulans).